Here is a 314-residue protein sequence, read N- to C-terminus: Putative S-adenosyl-L-methionine-dependent methyltransferase MAV_4441 (314 aa).

S-adenosyl-L-methionine-binding positions include Asp138 and 167–168 (DL).

This sequence belongs to the UPF0677 family.

Its function is as follows. Exhibits S-adenosyl-L-methionine-dependent methyltransferase activity. In Mycobacterium avium (strain 104), this protein is Putative S-adenosyl-L-methionine-dependent methyltransferase MAV_4441.